The chain runs to 348 residues: Dihydroorotase (348 aa).

His17 and His19 together coordinate Zn(2+). Residues 19-21 (HLR) and Asn45 each bind substrate. Positions 103, 140, and 178 each coordinate Zn(2+). Lys103 carries the N6-carboxylysine modification. Substrate is bound at residue His140. Leu223 serves as a coordination point for substrate. Asp251 is a Zn(2+) binding site. Asp251 is a catalytic residue. Residues His255 and Ala267 each coordinate substrate.

It belongs to the metallo-dependent hydrolases superfamily. DHOase family. Class II DHOase subfamily. In terms of assembly, homodimer. The cofactor is Zn(2+).

It catalyses the reaction (S)-dihydroorotate + H2O = N-carbamoyl-L-aspartate + H(+). It functions in the pathway pyrimidine metabolism; UMP biosynthesis via de novo pathway; (S)-dihydroorotate from bicarbonate: step 3/3. Its function is as follows. Catalyzes the reversible cyclization of carbamoyl aspartate to dihydroorotate. The chain is Dihydroorotase from Salmonella heidelberg (strain SL476).